Consider the following 272-residue polypeptide: Cell division protein FtsQ (272 aa).

The Cytoplasmic segment spans residues 1-20 (MSSYAPREIPLDIRLMQGTS). The helical transmembrane segment at 21-40 (RALFWLVALGCLFVAGHWLM) threads the bilayer. The Periplasmic portion of the chain corresponds to 41–272 (QRNWWDIRAV…KTPQPAGRKD (232 aa)). The 70-residue stretch at 45–114 (WDIRAVRLQG…MQLAVTLQAQ (70 aa)) folds into the POTRA domain.

This sequence belongs to the FtsQ/DivIB family. FtsQ subfamily. Part of a complex composed of FtsB, FtsL and FtsQ.

The protein resides in the cell inner membrane. Essential cell division protein. May link together the upstream cell division proteins, which are predominantly cytoplasmic, with the downstream cell division proteins, which are predominantly periplasmic. May control correct divisome assembly. The chain is Cell division protein FtsQ from Thiomonas arsenitoxydans (strain DSM 22701 / CIP 110005 / 3As).